The chain runs to 254 residues: Lipid uptake coordinator A (254 aa).

4 helical membrane-spanning segments follow: residues 5–25, 44–64, 85–105, and 114–134; these read VAVL…FYFV, LRIA…FTLL, IMAH…EVWL, and LFGI…GFYL. Residues 143–254 form a disordered region; that stretch reads PPPKPLKPKK…SGVQVAKVDE (112 aa). Positions 148–163 are enriched in basic residues; the sequence is LKPKKPKQRRLRRKKT. A compositionally biased stretch (acidic residues) spans 169-191; it reads AEPEAAEEAENTELAAQEDEEAV. A compositionally biased stretch (low complexity) spans 192–220; the sequence is EAPPESIESPGGEPESATREAPAAETATA. Positions 227–244 are enriched in basic residues; sequence LRNRRPTGKTSHRRRRTR.

In terms of assembly, interacts with the Mce1 and Mce4 accessory subunits Rv0199/OmamA, Rv0177/Mam1C and Rv3492c/Mam4B.

The protein localises to the cell membrane. Functionally, required for the import of both fatty acids and cholesterol during growth in macrophages and in axenic culture. Facilitates the uptake of these lipids by stabilizing protein subunits of the Mce1 and Mce4 multi-subunit transporters, which transport fatty acids and cholesterol, respectively. Required for full virulence in vivo. The protein is Lipid uptake coordinator A of Mycobacterium tuberculosis (strain ATCC 25618 / H37Rv).